The primary structure comprises 121 residues: Large ribosomal subunit protein uL14 (121 aa).

This sequence belongs to the universal ribosomal protein uL14 family. As to quaternary structure, part of the 50S ribosomal subunit. Forms a cluster with proteins L3 and L19. In the 70S ribosome, L14 and L19 interact and together make contacts with the 16S rRNA in bridges B5 and B8.

In terms of biological role, binds to 23S rRNA. Forms part of two intersubunit bridges in the 70S ribosome. This is Large ribosomal subunit protein uL14 from Porphyromonas gingivalis (strain ATCC 33277 / DSM 20709 / CIP 103683 / JCM 12257 / NCTC 11834 / 2561).